Reading from the N-terminus, the 328-residue chain is Glycerol-3-phosphate dehydrogenase [NAD(P)+] (328 aa).

Positions 15, 35, 51, and 107 each coordinate NADPH. 3 residues coordinate sn-glycerol 3-phosphate: Lys107, Gly135, and Ser137. Ala139 contacts NADPH. 5 residues coordinate sn-glycerol 3-phosphate: Lys190, Asp243, Ser253, Arg254, and Asn255. The active-site Proton acceptor is Lys190. Arg254 is an NADPH binding site. NADPH-binding residues include Leu276 and Glu278.

Belongs to the NAD-dependent glycerol-3-phosphate dehydrogenase family.

It is found in the cytoplasm. It catalyses the reaction sn-glycerol 3-phosphate + NAD(+) = dihydroxyacetone phosphate + NADH + H(+). It carries out the reaction sn-glycerol 3-phosphate + NADP(+) = dihydroxyacetone phosphate + NADPH + H(+). The protein operates within membrane lipid metabolism; glycerophospholipid metabolism. In terms of biological role, catalyzes the reduction of the glycolytic intermediate dihydroxyacetone phosphate (DHAP) to sn-glycerol 3-phosphate (G3P), the key precursor for phospholipid synthesis. This is Glycerol-3-phosphate dehydrogenase [NAD(P)+] from Rhodopseudomonas palustris (strain BisA53).